We begin with the raw amino-acid sequence, 145 residues long: 3-hydroxyacyl-[acyl-carrier-protein] dehydratase FabZ (145 aa).

The active site involves His-47.

This sequence belongs to the thioester dehydratase family. FabZ subfamily.

Its subcellular location is the cytoplasm. It catalyses the reaction a (3R)-hydroxyacyl-[ACP] = a (2E)-enoyl-[ACP] + H2O. Involved in unsaturated fatty acids biosynthesis. Catalyzes the dehydration of short chain beta-hydroxyacyl-ACPs and long chain saturated and unsaturated beta-hydroxyacyl-ACPs. The chain is 3-hydroxyacyl-[acyl-carrier-protein] dehydratase FabZ from Acidovorax sp. (strain JS42).